Here is a 138-residue protein sequence, read N- to C-terminus: Basic phospholipase A2 vurtoxin (138 aa).

An N-terminal signal peptide occupies residues 1–16 (MRTLWIVAVCLIGVEG). 7 disulfide bridges follow: cysteine 42–cysteine 131, cysteine 44–cysteine 60, cysteine 59–cysteine 111, cysteine 65–cysteine 138, cysteine 66–cysteine 104, cysteine 73–cysteine 97, and cysteine 91–cysteine 102. Ca(2+)-binding residues include tyrosine 43, glycine 45, and glycine 47. Histidine 63 is a catalytic residue. Position 64 (aspartate 64) interacts with Ca(2+). Aspartate 105 is a catalytic residue.

The cofactor is Ca(2+). Expressed by the venom gland.

The protein resides in the secreted. It catalyses the reaction a 1,2-diacyl-sn-glycero-3-phosphocholine + H2O = a 1-acyl-sn-glycero-3-phosphocholine + a fatty acid + H(+). Its function is as follows. Snake venom phospholipase A2 that may have a strong anticoagulant activity. Is able to suppress the acetylcholine (ACh)-evoked current mediated by alpha-7 (CHRNA7)-similar nAChRs in L.stagnalis neurons (IC(50)=10.5 uM) and to compete with alpha-bungarotoxin for binding to muscle- and alpha-7 neuronal nAChR types, as well as to AChBPs. In inhibition of alpha-bungarotoxin binding, this toxin is mostly active against T.californica nAChR (IC(50)=0.26 uM), it is moderately active against human alpha-7 nAChR (IC(50)=14 uM), and is not active against L.stagnalis and A.californica AChBP (IC(50)&gt;30 uM). The polypeptide is Basic phospholipase A2 vurtoxin (Vipera renardi (Steppe viper)).